The chain runs to 204 residues: dTTP/UTP pyrophosphatase (204 aa).

Aspartate 76 (proton acceptor) is an active-site residue.

The protein belongs to the Maf family. YhdE subfamily. It depends on a divalent metal cation as a cofactor.

It localises to the cytoplasm. The catalysed reaction is dTTP + H2O = dTMP + diphosphate + H(+). The enzyme catalyses UTP + H2O = UMP + diphosphate + H(+). Functionally, nucleoside triphosphate pyrophosphatase that hydrolyzes dTTP and UTP. May have a dual role in cell division arrest and in preventing the incorporation of modified nucleotides into cellular nucleic acids. This Salinibacter ruber (strain DSM 13855 / M31) protein is dTTP/UTP pyrophosphatase.